We begin with the raw amino-acid sequence, 200 residues long: MELMVKGADALTVSETTFGREFNEALVHQVVVAFAAGARQGTRAQKTRSEVSGGGAKPWRQKGTGRARAGTIRSPIWRTGGVTFAAKSQDHSQKVNKKMYRGAMKSILSELVRQERLIVVDNFSVEAPKTKELVAKLKELELTDALIVTSEVDENLFLAARNLYKVDARDVAGIDPVSLIAFDKVVMTAEAVKQVEEMLA.

The segment at 42-65 is disordered; it reads TRAQKTRSEVSGGGAKPWRQKGTG.

The protein belongs to the universal ribosomal protein uL4 family. As to quaternary structure, part of the 50S ribosomal subunit.

In terms of biological role, one of the primary rRNA binding proteins, this protein initially binds near the 5'-end of the 23S rRNA. It is important during the early stages of 50S assembly. It makes multiple contacts with different domains of the 23S rRNA in the assembled 50S subunit and ribosome. Its function is as follows. Forms part of the polypeptide exit tunnel. The sequence is that of Large ribosomal subunit protein uL4 from Vibrio campbellii (strain ATCC BAA-1116).